A 192-amino-acid polypeptide reads, in one-letter code: MNKRDYMNTSVQEPPLDYSFRSIHVIQDLVNEEPRTGLRPLKRSKSGKSLTQSLWLNNNVLNDLRDFNQVASQLLEHPENLAWIDLSFNDLTSIDPVLTTFFNLSVLYLHGNSIQRLGEVNKLAVLPRLRSLTLHGNPMEEEKGYRQYVLCTLSRITTFDFSGVTKADRTTAEVWKRMNIKPKKAWTKQNTL.

LRR repeat units follow at residues serine 49–alanine 71, asparagine 80–phenylalanine 101, and asparagine 103–alanine 124. The region spanning asparagine 137–tryptophan 175 is the LRRCT domain.

Its subcellular location is the cytoplasm. This chain is Leucine-rich repeat-containing protein 51, found in Homo sapiens (Human).